The following is a 271-amino-acid chain: Formamidopyrimidine-DNA glycosylase (271 aa).

Residue proline 2 is the Schiff-base intermediate with DNA of the active site. Glutamate 3 acts as the Proton donor in catalysis. The active-site Proton donor; for beta-elimination activity is lysine 56. Histidine 89, arginine 107, and arginine 151 together coordinate DNA. An FPG-type zinc finger spans residues methionine 236–lysine 270. Arginine 260 serves as the catalytic Proton donor; for delta-elimination activity.

The protein belongs to the FPG family. Monomer. Zn(2+) is required as a cofactor.

It catalyses the reaction Hydrolysis of DNA containing ring-opened 7-methylguanine residues, releasing 2,6-diamino-4-hydroxy-5-(N-methyl)formamidopyrimidine.. The catalysed reaction is 2'-deoxyribonucleotide-(2'-deoxyribose 5'-phosphate)-2'-deoxyribonucleotide-DNA = a 3'-end 2'-deoxyribonucleotide-(2,3-dehydro-2,3-deoxyribose 5'-phosphate)-DNA + a 5'-end 5'-phospho-2'-deoxyribonucleoside-DNA + H(+). Functionally, involved in base excision repair of DNA damaged by oxidation or by mutagenic agents. Acts as a DNA glycosylase that recognizes and removes damaged bases. Has a preference for oxidized purines, such as 7,8-dihydro-8-oxoguanine (8-oxoG). Has AP (apurinic/apyrimidinic) lyase activity and introduces nicks in the DNA strand. Cleaves the DNA backbone by beta-delta elimination to generate a single-strand break at the site of the removed base with both 3'- and 5'-phosphates. The chain is Formamidopyrimidine-DNA glycosylase from Albidiferax ferrireducens (strain ATCC BAA-621 / DSM 15236 / T118) (Rhodoferax ferrireducens).